Reading from the N-terminus, the 315-residue chain is 4-hydroxy-3-methylbut-2-enyl diphosphate reductase (315 aa).

Cysteine 12 provides a ligand contact to [4Fe-4S] cluster. (2E)-4-hydroxy-3-methylbut-2-enyl diphosphate-binding residues include histidine 41 and histidine 74. Dimethylallyl diphosphate is bound by residues histidine 41 and histidine 74. Residues histidine 41 and histidine 74 each contribute to the isopentenyl diphosphate site. Cysteine 96 is a binding site for [4Fe-4S] cluster. Histidine 124 contacts (2E)-4-hydroxy-3-methylbut-2-enyl diphosphate. Histidine 124 serves as a coordination point for dimethylallyl diphosphate. An isopentenyl diphosphate-binding site is contributed by histidine 124. The Proton donor role is filled by glutamate 126. Threonine 168 provides a ligand contact to (2E)-4-hydroxy-3-methylbut-2-enyl diphosphate. Residue cysteine 198 participates in [4Fe-4S] cluster binding. (2E)-4-hydroxy-3-methylbut-2-enyl diphosphate contacts are provided by serine 226, serine 227, asparagine 228, and serine 270. 4 residues coordinate dimethylallyl diphosphate: serine 226, serine 227, asparagine 228, and serine 270. The isopentenyl diphosphate site is built by serine 226, serine 227, asparagine 228, and serine 270.

The protein belongs to the IspH family. Requires [4Fe-4S] cluster as cofactor.

The catalysed reaction is isopentenyl diphosphate + 2 oxidized [2Fe-2S]-[ferredoxin] + H2O = (2E)-4-hydroxy-3-methylbut-2-enyl diphosphate + 2 reduced [2Fe-2S]-[ferredoxin] + 2 H(+). It catalyses the reaction dimethylallyl diphosphate + 2 oxidized [2Fe-2S]-[ferredoxin] + H2O = (2E)-4-hydroxy-3-methylbut-2-enyl diphosphate + 2 reduced [2Fe-2S]-[ferredoxin] + 2 H(+). Its pathway is isoprenoid biosynthesis; dimethylallyl diphosphate biosynthesis; dimethylallyl diphosphate from (2E)-4-hydroxy-3-methylbutenyl diphosphate: step 1/1. The protein operates within isoprenoid biosynthesis; isopentenyl diphosphate biosynthesis via DXP pathway; isopentenyl diphosphate from 1-deoxy-D-xylulose 5-phosphate: step 6/6. Functionally, catalyzes the conversion of 1-hydroxy-2-methyl-2-(E)-butenyl 4-diphosphate (HMBPP) into a mixture of isopentenyl diphosphate (IPP) and dimethylallyl diphosphate (DMAPP). Acts in the terminal step of the DOXP/MEP pathway for isoprenoid precursor biosynthesis. This Azotobacter vinelandii (strain DJ / ATCC BAA-1303) protein is 4-hydroxy-3-methylbut-2-enyl diphosphate reductase.